Reading from the N-terminus, the 193-residue chain is Acyl carrier protein phosphodiesterase (193 aa).

Belongs to the AcpH family.

The catalysed reaction is holo-[ACP] + H2O = apo-[ACP] + (R)-4'-phosphopantetheine + H(+). Its function is as follows. Converts holo-ACP to apo-ACP by hydrolytic cleavage of the phosphopantetheine prosthetic group from ACP. In Escherichia coli O127:H6 (strain E2348/69 / EPEC), this protein is Acyl carrier protein phosphodiesterase.